A 658-amino-acid polypeptide reads, in one-letter code: Transcription factor cep-1 (658 aa).

The DNA-binding element occupies 238–428 (EEWLTFEVKK…RDWKNFCEKR (191 aa)). Positions 319, 322, 375, and 379 each coordinate Zn(2+). Residues 450 to 477 (QSSLHSGPSSPEKVTDTSQMFQSTSSSS) form a disordered region. The segment covering 466-476 (TSQMFQSTSSS) has biased composition (low complexity). Residues 535-564 (QYGLQRQVKLSEKEYSKFVAFFAKEGENEI) are required for tertiary structure stability of the protein.

This sequence belongs to the p53 family. Homodimer. Interacts (via C-terminus domain) with prmt-5; not methylated by prmt-5. Interacts with cbp-1 (via HAT domain); cep-1 transcriptional activity may be inhibited by interaction with methylated cbp-1. Component of a complex that contains prmt-5 and cbp-1. Interacts with ape-1; the interaction inhibits pro-apoptotic activity of cep-1. Zn(2+) serves as cofactor. Phosphorylated in response to IR-induced DNA damage which is thought to be mediated by akt-1.

Its subcellular location is the nucleus. Functionally, transcriptional activator that binds the same DNA consensus sequence as p53. Has a role in normal development to ensure proper meiotic chromosome segregation. Promotes apoptosis under conditions of cellular and genotoxic stress in response to DNA damage, hypoxia, or starvation. However, not required for DNA repair in response to UV-C or to regulate cell-cycle progression. Regulates germline apoptosis in response to DNA damage. Required for induction of ced-13 in response to DNA damage. Its pro-apoptotic activity is inhibited when bound to ape-1 in vitro. Regulates germline proliferation by activating phg-1. Regulates DNA damage-induced apoptosis by inducing transcription of the programmed cell death activator egl-1. Negatively regulates lifespan. This chain is Transcription factor cep-1, found in Caenorhabditis briggsae.